The primary structure comprises 411 residues: Serine--tRNA ligase (411 aa).

226-228 (TSE) provides a ligand contact to L-serine. Residue 257 to 259 (RQE) participates in ATP binding. Residue glutamate 280 participates in L-serine binding. 344–347 (EISS) is a binding site for ATP. Position 379 (serine 379) interacts with L-serine.

This sequence belongs to the class-II aminoacyl-tRNA synthetase family. Type-1 seryl-tRNA synthetase subfamily. In terms of assembly, homodimer. The tRNA molecule binds across the dimer.

The protein resides in the cytoplasm. The catalysed reaction is tRNA(Ser) + L-serine + ATP = L-seryl-tRNA(Ser) + AMP + diphosphate + H(+). It catalyses the reaction tRNA(Sec) + L-serine + ATP = L-seryl-tRNA(Sec) + AMP + diphosphate + H(+). It participates in aminoacyl-tRNA biosynthesis; selenocysteinyl-tRNA(Sec) biosynthesis; L-seryl-tRNA(Sec) from L-serine and tRNA(Sec): step 1/1. Functionally, catalyzes the attachment of serine to tRNA(Ser). Is also able to aminoacylate tRNA(Sec) with serine, to form the misacylated tRNA L-seryl-tRNA(Sec), which will be further converted into selenocysteinyl-tRNA(Sec). The sequence is that of Serine--tRNA ligase from Campylobacter lari (strain RM2100 / D67 / ATCC BAA-1060).